The primary structure comprises 81 residues: Antimicrobial peptide D2 (81 aa).

Residues 1–31 form the signal peptide; sequence MAKTVLGIHVTFLTLLFAVILLNDVMYTPVE. Intrachain disulfides connect cysteine 34-cysteine 81, cysteine 45-cysteine 66, cysteine 51-cysteine 75, and cysteine 55-cysteine 77.

Its function is as follows. Antimicrobial peptide probably active against fungi like B.sorokiniana, F.oxysporum, F.graminearum, F.avenaceum, B.cinerea, P.beta, P.infestans and P.debaryanum. The chain is Antimicrobial peptide D2 from Stellaria media (Common chickweed).